The sequence spans 225 residues: PKHD-type hydroxylase YbiX (225 aa).

The region spanning 78–177 is the Fe2OG dioxygenase domain; sequence TLSTPLFNRY…RVASFMWIQS (100 aa). Fe cation is bound by residues H96, D98, and H158. 2-oxoglutarate is bound at residue R168.

Requires Fe(2+) as cofactor. The cofactor is L-ascorbate.

The sequence is that of PKHD-type hydroxylase YbiX from Shigella flexneri serotype 5b (strain 8401).